Here is a 1402-residue protein sequence, read N- to C-terminus: DNA-directed RNA polymerase subunit beta' (1402 aa).

Zn(2+) is bound by residues C71, C73, C86, and C89. Mg(2+) is bound by residues D462, D464, and D466. 4 residues coordinate Zn(2+): C811, C885, C892, and C895.

This sequence belongs to the RNA polymerase beta' chain family. The RNAP catalytic core consists of 2 alpha, 1 beta, 1 beta' and 1 omega subunit. When a sigma factor is associated with the core the holoenzyme is formed, which can initiate transcription. Mg(2+) is required as a cofactor. The cofactor is Zn(2+).

The catalysed reaction is RNA(n) + a ribonucleoside 5'-triphosphate = RNA(n+1) + diphosphate. Functionally, DNA-dependent RNA polymerase catalyzes the transcription of DNA into RNA using the four ribonucleoside triphosphates as substrates. This is DNA-directed RNA polymerase subunit beta' from Bartonella henselae (strain ATCC 49882 / DSM 28221 / CCUG 30454 / Houston 1) (Rochalimaea henselae).